We begin with the raw amino-acid sequence, 646 residues long: Macrolide export ATP-binding/permease protein MacB (646 aa).

An ABC transporter domain is found at 5–243; sequence IELKGVSRTY…TLPKTNRIRQ (239 aa). 41–48 contributes to the ATP binding site; that stretch reads GASGSGKS. The next 4 membrane-spanning stretches (helical) occupy residues 272–292, 518–538, 570–590, and 611–631; these read TLTMIGIVFGIASVVTVVALG, FSILILMVACISLMIGSIGVM, IIEAVLVCLIGGALGIALSYI, and AAVAAFFCSTLIGIIFGYLPA.

Belongs to the ABC transporter superfamily. Macrolide exporter (TC 3.A.1.122) family. Homodimer. Part of the tripartite efflux system MacAB-TolC, which is composed of an inner membrane transporter, MacB, a periplasmic membrane fusion protein, MacA, and an outer membrane component, TolC. The complex forms a large protein conduit and can translocate molecules across both the inner and outer membranes. Interacts with MacA.

The protein localises to the cell inner membrane. In terms of biological role, part of the tripartite efflux system MacAB-TolC. MacB is a non-canonical ABC transporter that contains transmembrane domains (TMD), which form a pore in the inner membrane, and an ATP-binding domain (NBD), which is responsible for energy generation. Confers resistance against macrolides. In Escherichia coli, this protein is Macrolide export ATP-binding/permease protein MacB.